Reading from the N-terminus, the 184-residue chain is Peptide deformylase (184 aa).

Residues Cys111 and His154 each contribute to the Fe cation site. Glu155 is an active-site residue. His158 contributes to the Fe cation binding site.

It belongs to the polypeptide deformylase family. It depends on Fe(2+) as a cofactor.

It catalyses the reaction N-terminal N-formyl-L-methionyl-[peptide] + H2O = N-terminal L-methionyl-[peptide] + formate. In terms of biological role, removes the formyl group from the N-terminal Met of newly synthesized proteins. Requires at least a dipeptide for an efficient rate of reaction. N-terminal L-methionine is a prerequisite for activity but the enzyme has broad specificity at other positions. This is Peptide deformylase from Lacticaseibacillus casei (strain BL23) (Lactobacillus casei).